The following is a 396-amino-acid chain: MSESVHTNTSLWSKGMKAVIVAQFLSAFGDNALLFATLALLKAQFYPEWSQPILQMVFVGAYILLAPFVGQVADSFAKGRVMMFANGLKLLGAASICFGINPFLGYTLVGVGAAAYSPAKYGILGELTTGSKLVKANGLMEASAIAAILLGSVAGGVLADWHVLVALAACALAYGGAVVANIYIPKLAARPGQSWNLINMTRSFLNACTSLWCNGETRFSLVGTSLFWGAGVTLRFLLVLWVPVALGITDNATPTYLNAMVAIGIVVGAGAAAKLVTLETVSRCMPAGILIGVVVPIFSLQHELLPAYALLMLIGVLGGFFVVPLNALLQERGKKSVGAGNAIAVQNLGENSAMLLMLGIYSLAVMVGIPVVPIGIGFGALFALAITALWIWQRRH.

The Periplasmic portion of the chain corresponds to Met1–Lys17. A helical transmembrane segment spans residues Ala18–Leu38. Over Ala39–Pro52 the chain is Cytoplasmic. The chain crosses the membrane as a helical span at residues Ile53–Ala73. The Periplasmic segment spans residues Asp74 to Leu90. Residues Leu91 to Val111 traverse the membrane as a helical segment. At Gly112–Ala144 the chain is on the cytoplasmic side. Residues Ile145–Val165 form a helical membrane-spanning segment. Ala166 is a topological domain (periplasmic). Residues Leu167–Leu187 form a helical membrane-spanning segment. Residues Ala188–Ser225 are Cytoplasmic-facing. A helical membrane pass occupies residues Leu226–Leu246. Over Gly247–Thr255 the chain is Periplasmic. Residues Tyr256–Val276 form a helical membrane-spanning segment. Topologically, residues Thr277 to Glu279 are cytoplasmic. A helical transmembrane segment spans residues Thr280–Leu300. Over Gln301–Glu303 the chain is Periplasmic. A helical membrane pass occupies residues Leu304–Pro324. Residues Leu325 to Ala342 lie on the Cytoplasmic side of the membrane. A helical membrane pass occupies residues Ile343–Leu363. At Ala364–Val365 the chain is on the periplasmic side. Residues Met366–Ile386 form a helical membrane-spanning segment. Topologically, residues Thr387–His396 are cytoplasmic.

This sequence belongs to the major facilitator superfamily. LplT (TC 2.A.1.42) family.

Its subcellular location is the cell inner membrane. Catalyzes the facilitated diffusion of 2-acyl-glycero-3-phosphoethanolamine (2-acyl-GPE) into the cell. The chain is Lysophospholipid transporter LplT from Shigella flexneri.